Here is a 322-residue protein sequence, read N- to C-terminus: uncharacterized protein (322 aa).

The Radical SAM core domain maps to 26-267; the sequence is HFGHKVFKVA…CDQLEIIPPE (242 aa). Positions 42, 54, and 57 each coordinate [4Fe-4S] cluster.

The protein belongs to the radical SAM superfamily. The cofactor is [4Fe-4S] cluster.

This is an uncharacterized protein from Bacillus subtilis (strain 168).